Consider the following 58-residue polypeptide: Curromycin resistance protein (58 aa).

A disordered region spans residues 1–37; it reads MSVVALGATSITPPHGPESQGRPFPARGPVRPSARAR. The span at 25-37 shows a compositional bias: low complexity; sequence PARGPVRPSARAR.

This chain is Curromycin resistance protein (cre), found in Streptomyces hygroscopicus.